Reading from the N-terminus, the 428-residue chain is Adenylosuccinate synthetase (428 aa).

Residues 12 to 18 (GDEGKGK) and 40 to 42 (GHT) each bind GTP. Aspartate 13 acts as the Proton acceptor in catalysis. Positions 13 and 40 each coordinate Mg(2+). IMP contacts are provided by residues 13–16 (DEGK), 38–41 (NAGH), threonine 130, arginine 144, glutamine 225, threonine 240, and arginine 304. The Proton donor role is filled by histidine 41. 300–306 (VNTGRSR) is a binding site for substrate. GTP is bound by residues arginine 306, 332-334 (KID), and 414-416 (GVG).

Belongs to the adenylosuccinate synthetase family. In terms of assembly, homodimer. The cofactor is Mg(2+).

It is found in the cytoplasm. The enzyme catalyses IMP + L-aspartate + GTP = N(6)-(1,2-dicarboxyethyl)-AMP + GDP + phosphate + 2 H(+). It functions in the pathway purine metabolism; AMP biosynthesis via de novo pathway; AMP from IMP: step 1/2. Functionally, plays an important role in the de novo pathway of purine nucleotide biosynthesis. Catalyzes the first committed step in the biosynthesis of AMP from IMP. This chain is Adenylosuccinate synthetase, found in Clostridium beijerinckii (strain ATCC 51743 / NCIMB 8052) (Clostridium acetobutylicum).